The following is a 137-amino-acid chain: MPTINQLVRKPRRAQVTKSKSPAMNVGYNSRKKVQTKLASPQKRGVATRVGTMTPKKPNSALRKFARVRLSNLMEVTAYIPGIGHNLQEHSVVLLRGGRVKDLPGVRYHIVRGALDTAGVADRKQSRSKYGAKKPKA.

The interval 1–57 is disordered; the sequence is MPTINQLVRKPRRAQVTKSKSPAMNVGYNSRKKVQTKLASPQKRGVATRVGTMTPKK. The residue at position 102 (Asp102) is a 3-methylthioaspartic acid.

This sequence belongs to the universal ribosomal protein uS12 family. In terms of assembly, part of the 30S ribosomal subunit. Contacts proteins S8 and S17. May interact with IF1 in the 30S initiation complex.

With S4 and S5 plays an important role in translational accuracy. Functionally, interacts with and stabilizes bases of the 16S rRNA that are involved in tRNA selection in the A site and with the mRNA backbone. Located at the interface of the 30S and 50S subunits, it traverses the body of the 30S subunit contacting proteins on the other side and probably holding the rRNA structure together. The combined cluster of proteins S8, S12 and S17 appears to hold together the shoulder and platform of the 30S subunit. This chain is Small ribosomal subunit protein uS12, found in Lactococcus lactis subsp. lactis (strain IL1403) (Streptococcus lactis).